The sequence spans 264 residues: Acyl-[acyl-carrier-protein]--UDP-N-acetylglucosamine O-acyltransferase (264 aa).

The protein belongs to the transferase hexapeptide repeat family. LpxA subfamily. As to quaternary structure, homotrimer.

It localises to the cytoplasm. It catalyses the reaction a (3R)-hydroxyacyl-[ACP] + UDP-N-acetyl-alpha-D-glucosamine = a UDP-3-O-[(3R)-3-hydroxyacyl]-N-acetyl-alpha-D-glucosamine + holo-[ACP]. Its pathway is glycolipid biosynthesis; lipid IV(A) biosynthesis; lipid IV(A) from (3R)-3-hydroxytetradecanoyl-[acyl-carrier-protein] and UDP-N-acetyl-alpha-D-glucosamine: step 1/6. Involved in the biosynthesis of lipid A, a phosphorylated glycolipid that anchors the lipopolysaccharide to the outer membrane of the cell. This chain is Acyl-[acyl-carrier-protein]--UDP-N-acetylglucosamine O-acyltransferase, found in Rickettsia rickettsii.